Here is a 124-residue protein sequence, read N- to C-terminus: Large ribosomal subunit protein bL12 (124 aa).

This sequence belongs to the bacterial ribosomal protein bL12 family. As to quaternary structure, homodimer. Part of the ribosomal stalk of the 50S ribosomal subunit. Forms a multimeric L10(L12)X complex, where L10 forms an elongated spine to which 2 to 4 L12 dimers bind in a sequential fashion. Binds GTP-bound translation factors.

In terms of biological role, forms part of the ribosomal stalk which helps the ribosome interact with GTP-bound translation factors. Is thus essential for accurate translation. This Christiangramia forsetii (strain DSM 17595 / CGMCC 1.15422 / KT0803) (Gramella forsetii) protein is Large ribosomal subunit protein bL12.